The sequence spans 193 residues: Orotate phosphoribosyltransferase (193 aa).

5-phospho-alpha-D-ribose 1-diphosphate is bound at residue 114-122 (EDVITTGGS). Residues T118 and R146 each coordinate orotate.

It belongs to the purine/pyrimidine phosphoribosyltransferase family. PyrE subfamily. In terms of assembly, homodimer. The cofactor is Mg(2+).

It carries out the reaction orotidine 5'-phosphate + diphosphate = orotate + 5-phospho-alpha-D-ribose 1-diphosphate. It participates in pyrimidine metabolism; UMP biosynthesis via de novo pathway; UMP from orotate: step 1/2. Functionally, catalyzes the transfer of a ribosyl phosphate group from 5-phosphoribose 1-diphosphate to orotate, leading to the formation of orotidine monophosphate (OMP). This chain is Orotate phosphoribosyltransferase, found in Chlorobium phaeobacteroides (strain BS1).